Reading from the N-terminus, the 293-residue chain is ATP synthase gamma chain (293 aa).

This sequence belongs to the ATPase gamma chain family. As to quaternary structure, F-type ATPases have 2 components, CF(1) - the catalytic core - and CF(0) - the membrane proton channel. CF(1) has five subunits: alpha(3), beta(3), gamma(1), delta(1), epsilon(1). CF(0) has three main subunits: a, b and c.

The protein localises to the cell inner membrane. Its function is as follows. Produces ATP from ADP in the presence of a proton gradient across the membrane. The gamma chain is believed to be important in regulating ATPase activity and the flow of protons through the CF(0) complex. The chain is ATP synthase gamma chain from Nitrosospira multiformis (strain ATCC 25196 / NCIMB 11849 / C 71).